Reading from the N-terminus, the 510-residue chain is Histone deacetylase 3 (510 aa).

Residues 24–338 (RRVCYFYDPE…WCYETGVALG (315 aa)) are histone deacetylase. Histidine 158 (proton donor/acceptor) is an active-site residue. The Zn(2+) site is built by aspartate 193, histidine 195, and aspartate 281. Residues 394 to 510 (PSVQFQERIP…ARNEPGSSPK (117 aa)) are disordered. 2 stretches are compositionally biased toward basic and acidic residues: residues 418–434 (DERH…DHKP) and 448–472 (VKRE…HKGP). The segment covering 485-503 (APTADANAVAVNAPGNARN) has biased composition (low complexity).

This sequence belongs to the histone deacetylase family. HD Type 1 subfamily. Zn(2+) is required as a cofactor. As to expression, expressed in roots.

It localises to the nucleus. The catalysed reaction is N(6)-acetyl-L-lysyl-[histone] + H2O = L-lysyl-[histone] + acetate. In terms of biological role, responsible for the deacetylation of lysine residues on the N-terminal part of the core histones (H2A, H2B, H3 and H4). Histone deacetylation gives a tag for epigenetic repression and plays an important role in transcriptional regulation, cell cycle progression and developmental events. Histone deacetylases act via the formation of large multiprotein complexes. The chain is Histone deacetylase 3 from Oryza sativa subsp. japonica (Rice).